A 332-amino-acid chain; its full sequence is GTP 3',8-cyclase (332 aa).

Positions 9–220 (RFARKVDYLR…DQVRERIAER (212 aa)) constitute a Radical SAM core domain. Arginine 18 is a GTP binding site. Positions 25 and 29 each coordinate [4Fe-4S] cluster. Residue tyrosine 31 participates in S-adenosyl-L-methionine binding. Cysteine 32 is a binding site for [4Fe-4S] cluster. Arginine 67 contributes to the GTP binding site. An S-adenosyl-L-methionine-binding site is contributed by glycine 71. GTP is bound at residue threonine 98. Serine 122 serves as a coordination point for S-adenosyl-L-methionine. Residue lysine 159 coordinates GTP. Methionine 193 serves as a coordination point for S-adenosyl-L-methionine. [4Fe-4S] cluster-binding residues include cysteine 258 and cysteine 261. 263–265 (RVR) provides a ligand contact to GTP. [4Fe-4S] cluster is bound at residue cysteine 275.

This sequence belongs to the radical SAM superfamily. MoaA family. Monomer and homodimer. [4Fe-4S] cluster serves as cofactor.

The catalysed reaction is GTP + AH2 + S-adenosyl-L-methionine = (8S)-3',8-cyclo-7,8-dihydroguanosine 5'-triphosphate + 5'-deoxyadenosine + L-methionine + A + H(+). It functions in the pathway cofactor biosynthesis; molybdopterin biosynthesis. Catalyzes the cyclization of GTP to (8S)-3',8-cyclo-7,8-dihydroguanosine 5'-triphosphate. This is GTP 3',8-cyclase from Pseudomonas savastanoi pv. phaseolicola (strain 1448A / Race 6) (Pseudomonas syringae pv. phaseolicola (strain 1448A / Race 6)).